The sequence spans 513 residues: MDTTTTATQMLHLPSLPVLLSFLLFLLMLIRYWKNSNGQGKQPPGPKPLPILGNLHQLADGQPHHVMTKLCRKYGPVMKLKLGQLDAVIISSPEAAKEVLKTNEIKFAQRPEVYAVEIMSYDHSSIVFAPYGDYWREMRKISVLELLSNKRVQSFRSIREDEVWGLVEFISSNQGRPINLSEKIFTMTNDIIARAAFGRKNSDQHNFTVLLEEIMKIGAGFAIADLYPSLTFLRPLTGVKPALMRIQKKMDKILEDIVAEHKLKRKAAANNNVKLEEEDLVDTLLNYAEATNKNEFHLTIDQVKAVTLDIFSAGSETSATSMEWAMSELLKNPRVMKKAQEEVRQACKGKSKIQEADIQKLDYLKLVIKETFRLHAPGPFTPREAREKCEIRGYTIPAKAKILINLHAIGRDPTVWKDPECFRPERFEGSSTDFKGNHFELIPFGGGRRICPGISFATANIELGLAQLMYHFDWKLANGERLEDLDMSENFGMTARRKENLQVIATTRIPFEK.

Residues 10–30 (MLHLPSLPVLLSFLLFLLMLI) form a helical membrane-spanning segment. C451 serves as a coordination point for heme.

It belongs to the cytochrome P450 family. Heme serves as cofactor. In terms of tissue distribution, accumulates in mature fruits and in juice vesicles.

Its subcellular location is the membrane. It carries out the reaction dihydroniloticin + 2 reduced [NADPH--hemoprotein reductase] + 2 O2 = melianol + 2 oxidized [NADPH--hemoprotein reductase] + 3 H2O + 2 H(+). The protein operates within secondary metabolite biosynthesis; terpenoid biosynthesis. Its function is as follows. Monooxygenase involved in the biosynthesis of limonoids triterpene natural products such as limonin, a compound with insecticidal activity responsible for the bitter taste in citrus. Catalyzes the conversion of dihydroniloticin to the protolimonoid melianol. The chain is Melianol synthase CYP71BQ4 from Citrus sinensis (Sweet orange).